Here is a 345-residue protein sequence, read N- to C-terminus: N-acetyl-gamma-glutamyl-phosphate reductase (345 aa).

Residue C149 is part of the active site.

This sequence belongs to the NAGSA dehydrogenase family. Type 1 subfamily.

It is found in the cytoplasm. The catalysed reaction is N-acetyl-L-glutamate 5-semialdehyde + phosphate + NADP(+) = N-acetyl-L-glutamyl 5-phosphate + NADPH + H(+). The protein operates within amino-acid biosynthesis; L-arginine biosynthesis; N(2)-acetyl-L-ornithine from L-glutamate: step 3/4. Functionally, catalyzes the NADPH-dependent reduction of N-acetyl-5-glutamyl phosphate to yield N-acetyl-L-glutamate 5-semialdehyde. This Bacillus anthracis protein is N-acetyl-gamma-glutamyl-phosphate reductase.